The primary structure comprises 62 residues: Photosystem II reaction center protein Z (62 aa).

The next 2 helical transmembrane spans lie at 8–28 (AVFA…VVFA) and 41–61 (FSGT…NSLI).

This sequence belongs to the PsbZ family. As to quaternary structure, PSII is composed of 1 copy each of membrane proteins PsbA, PsbB, PsbC, PsbD, PsbE, PsbF, PsbH, PsbI, PsbJ, PsbK, PsbL, PsbM, PsbT, PsbY, PsbZ, Psb30/Ycf12, at least 3 peripheral proteins of the oxygen-evolving complex and a large number of cofactors. It forms dimeric complexes.

The protein resides in the plastid. It localises to the chloroplast thylakoid membrane. Functionally, may control the interaction of photosystem II (PSII) cores with the light-harvesting antenna, regulates electron flow through the 2 photosystem reaction centers. PSII is a light-driven water plastoquinone oxidoreductase, using light energy to abstract electrons from H(2)O, generating a proton gradient subsequently used for ATP formation. The chain is Photosystem II reaction center protein Z from Morus indica (Mulberry).